A 1223-amino-acid chain; its full sequence is Rho family-interacting cell polarization regulator 1 (1223 aa).

At S22 the chain carries Phosphoserine. Residues 89–114 (LTAYLEVHQQEQEKLQGQIRESKRNS) are a coiled coil. Phosphoserine is present on residues S349 and S351. T355 is modified (phosphothreonine). A disordered region spans residues 375-411 (NGTAWSLSSESSDDSSSPQLSGTARHSPAPRPLVQQP). The segment covering 380–395 (SLSSESSDDSSSPQLS) has biased composition (low complexity). S456 and S459 each carry phosphoserine. Disordered stretches follow at residues 475 to 769 (ESLA…APQH) and 856 to 889 (FLNE…SPSA). Low complexity-rich tracts occupy residues 505-523 (GHSA…PTST) and 546-564 (PGPT…TTTH). Residues 565–592 (SAPSPLTHTTTGSTHKPIISTLTTTGPT) are compositionally biased toward polar residues. Composition is skewed to low complexity over residues 601–650 (TTTS…PTPS) and 659–675 (TSPT…TTSP). The span at 680 to 695 (VSPSTSLELATLSSPS) shows a compositional bias: polar residues. Over residues 858–867 (NEDEDEDNDV) the composition is skewed to acidic residues. S874 and S875 each carry phosphoserine.

It belongs to the RIPOR family. As to quaternary structure, interacts (via N-terminus) with RHOA (GTP-bound form); this interaction links active RHOA to STK24 and STK26 kinases. Interacts with RHOB. Interacts with RHOC. Interacts (via C-terminus) with PDCD10; this interaction occurs in a Rho-independent manner. Interacts (via C-terminus) with STK24; this interaction occurs in a PDCD10-dependent and Rho-independent manner. Interacts (via C-terminus) with STK26; this interaction occurs in a PDCD10-dependent and Rho-independent manner. Interacts (via N-terminus) with 14-3-3 proteins; these interactions occur in a Rho-dependent manner.

The protein resides in the cytoplasm. It localises to the golgi apparatus. In terms of biological role, downstream effector protein for Rho-type small GTPases that plays a role in cell polarity and directional migration. Acts as an adapter protein, linking active Rho proteins to STK24 and STK26 kinases, and hence positively regulates Golgi reorientation in polarized cell migration upon Rho activation. Involved in the subcellular relocation of STK26 from the Golgi to cytoplasm punctae in a Rho- and PDCD10-dependent manner upon serum stimulation. The chain is Rho family-interacting cell polarization regulator 1 (RIPOR1) from Homo sapiens (Human).